Reading from the N-terminus, the 114-residue chain is Cell cycle protein GpsB (114 aa).

Residues 42-77 adopt a coiled-coil conformation; sequence YQKMADMNNEVVKLSEENHKLKKELEELRLRVATSR. The tract at residues 74–99 is disordered; that stretch reads ATSRPQDNKSFSSNNTTTNTSSNNVD. Residues 85 to 97 are compositionally biased toward low complexity; the sequence is SSNNTTTNTSSNN.

The protein belongs to the GpsB family. In terms of assembly, forms polymers through the coiled coil domains. Interacts with PBP1, MreC and EzrA.

Its subcellular location is the cytoplasm. Functionally, divisome component that associates with the complex late in its assembly, after the Z-ring is formed, and is dependent on DivIC and PBP2B for its recruitment to the divisome. Together with EzrA, is a key component of the system that regulates PBP1 localization during cell cycle progression. Its main role could be the removal of PBP1 from the cell pole after pole maturation is completed. Also contributes to the recruitment of PBP1 to the division complex. Not essential for septum formation. The polypeptide is Cell cycle protein GpsB (Staphylococcus aureus (strain Mu3 / ATCC 700698)).